A 145-amino-acid chain; its full sequence is 3-hydroxyacyl-[acyl-carrier-protein] dehydratase FabZ (145 aa).

The active site involves His-47.

This sequence belongs to the thioester dehydratase family. FabZ subfamily.

It localises to the cytoplasm. The catalysed reaction is a (3R)-hydroxyacyl-[ACP] = a (2E)-enoyl-[ACP] + H2O. In terms of biological role, involved in unsaturated fatty acids biosynthesis. Catalyzes the dehydration of short chain beta-hydroxyacyl-ACPs and long chain saturated and unsaturated beta-hydroxyacyl-ACPs. This chain is 3-hydroxyacyl-[acyl-carrier-protein] dehydratase FabZ, found in Acidovorax sp. (strain JS42).